Consider the following 189-residue polypeptide: Peptidyl-tRNA hydrolase (189 aa).

Y15 serves as a coordination point for tRNA. Residue H20 is the Proton acceptor of the active site. 3 residues coordinate tRNA: F66, N68, and N114.

Belongs to the PTH family. As to quaternary structure, monomer.

The protein localises to the cytoplasm. The catalysed reaction is an N-acyl-L-alpha-aminoacyl-tRNA + H2O = an N-acyl-L-amino acid + a tRNA + H(+). In terms of biological role, hydrolyzes ribosome-free peptidyl-tRNAs (with 1 or more amino acids incorporated), which drop off the ribosome during protein synthesis, or as a result of ribosome stalling. Its function is as follows. Catalyzes the release of premature peptidyl moieties from peptidyl-tRNA molecules trapped in stalled 50S ribosomal subunits, and thus maintains levels of free tRNAs and 50S ribosomes. This chain is Peptidyl-tRNA hydrolase, found in Streptococcus equi subsp. zooepidemicus (strain MGCS10565).